The following is a 1877-amino-acid chain: Proprotein convertase subtilisin/kexin type 5 (1877 aa).

Positions 1–34 (MDWDWGNRCSRPGRRDLLCVLALLAGCLLPVCRT) are cleaved as a signal peptide. The propeptide occupies 35 to 116 (RVYTNHWAVK…QQVVKKRTKR (82 aa)). The Extracellular segment spans residues 117 to 1768 (DYDLSHAQST…EAEFYEHTKT (1652 aa)). A Peptidase S8 domain is found at 136 to 455 (MWYMHCSDNT…FGLMDAEAMV (320 aa)). Residues D173 and H214 each act as charge relay system in the active site. Residues N227 and N383 are each glycosylated (N-linked (GlcNAc...) asparagine). The active-site Charge relay system is S388. In terms of domain architecture, P/Homo B spans 463–603 (TVPQQHVCVE…SLVLYGTSVQ (141 aa)). A Cell attachment site motif is present at residues 521–523 (RGD). FU repeat units lie at residues 632-682 (EDYA…GHYH), 685-732 (KKRC…GSYE), 736-779 (KNVC…GQFF), 781-826 (GHDC…SYYL), 834-881 (YKSC…GEYI), 884-929 (QGHC…WKFE), 931-981 (KKQC…GHYP), 984-1030 (GHAC…GEFQ), 1034-1079 (YEEC…KTFG), 1081-1123 (KWEC…GFHG), 1127-1168 (LGEC…STWP), 1206-1248 (TSQN…GTWP), 1252-1299 (SGSC…GFYA), 1301-1345 (DGVC…KHVA), 1347-1390 (EGVC…SFYP), 1392-1438 (MRQC…GTYK), 1442-1487 (NDEC…VEYW), 1491-1536 (SHRC…GYHT), 1540-1585 (SQQC…GYYG), 1589-1636 (SGRC…HYYA), 1640-1685 (AQTC…GEYR), and 1691-1738 (NFNC…SHSR). A CRM (Cys-rich motif) region spans residues 638 to 1753 (CDPECSEVGC…CDCQSSTDEC (1116 aa)). A glycan (N-linked (GlcNAc...) asparagine) is linked at N667. N-linked (GlcNAc...) asparagine glycosylation is found at N754, N804, and N854. N951 and N1016 each carry an N-linked (GlcNAc...) asparagine glycan. Residue N1220 is glycosylated (N-linked (GlcNAc...) asparagine). N-linked (GlcNAc...) asparagine glycosylation is present at N1317. N1523 carries an N-linked (GlcNAc...) asparagine glycan. Residues N1711 and N1733 are each glycosylated (N-linked (GlcNAc...) asparagine). The chain crosses the membrane as a helical span at residues 1769-1789 (ALLVTSGAMLLLLLGAAAVVW). Topologically, residues 1790 to 1877 (RKSRSRPVAK…EYDDESYSYQ (88 aa)) are cytoplasmic. AC stretches follow at residues 1825 to 1844 (VIEY…IVYM) and 1856 to 1877 (YGLL…YSYQ).

The protein belongs to the peptidase S8 family. In terms of tissue distribution, PC5A is expressed in most tissues but is most abundant in the intestine and adrenals. PC5B is expressed in the intestine, adrenals and lung but not in the brain.

It is found in the secreted. Its subcellular location is the endomembrane system. Serine endoprotease that processes various proproteins by cleavage at paired basic amino acids, recognizing the RXXX[KR]R consensus motif. Likely functions in the constitutive and regulated secretory pathways. Plays an essential role in pregnancy establishment by proteolytic activation of a number of important factors such as BMP2, CALD1 and alpha-integrins. May be responsible for the maturation of gastrointestinal peptides. May be involved in the cellular proliferation of adrenal cortex via the activation of growth factors. In Mus musculus (Mouse), this protein is Proprotein convertase subtilisin/kexin type 5 (Pcsk5).